Reading from the N-terminus, the 645-residue chain is MSHNTVIPTTDISPKPDPARPRKAQRDAAQEFINSIQGVTFPNSRRIYLQGSRDDIQVPMREIQLSPTLIGGTKEEPQYEENEAIPVYDTSGAYGDPDAKLDVHVGLTQLRQPWIDERQDTEPVAALSSDFTQQRLTDAGLDHLRFNHRPHPLKARKDKRVTQLHYARQGIITPEMEFIALRENMGRERIRGDVLRQQHPGQSFGAQLPENITPEFVRQEVAAGRAIIPANINHPESEPMIIGRNFLVKVNANIGNSSVTSSIEEEVEKLIWSTRWGADTVMDLSTGRYIHETREWILRNSPVPIGTVPIYQALEKVNGGAENLTWEIFRDTLLEQAEQGVDYFTIHAGVLLRYVPMTAKRLTGIVSRGGSIMAKWCLSHHQENFLYQHFREICEICAAYDVSLSLGDGLRPGSIQDANDEAQFAELHTLGELTKIAWEYDVQVMIEGPGHIPMQMIRRNMTEELEHCHEAPFYTLGPLTTDIAPGYDHFTSGIGAAMIGWFGCAMLCYVTPKEHLGLPNKDDVKQGLITYKIAAHAADLAKGHPGAQIRDNAMSKARFEFRWEDQFNLALDPDTARAYHDETLPQASGKIAHFCSMCGPKFCSMKISQEVRDYAAGMEQMSEAFRAHGSELYHSVEDVSHEQSA.

Over residues 1–12 (MSHNTVIPTTDI) the composition is skewed to polar residues. A disordered region spans residues 1–25 (MSHNTVIPTTDISPKPDPARPRKAQ). Residues asparagine 253, methionine 282, tyrosine 311, histidine 347, 367 to 369 (SRG), 408 to 411 (DGLR), and glutamate 447 each bind substrate. Histidine 451 lines the Zn(2+) pocket. Tyrosine 474 lines the substrate pocket. A Zn(2+)-binding site is contributed by histidine 515. Residues cysteine 595, cysteine 598, and cysteine 603 each coordinate [4Fe-4S] cluster.

Belongs to the ThiC family. As to quaternary structure, homodimer. The cofactor is [4Fe-4S] cluster.

It carries out the reaction 5-amino-1-(5-phospho-beta-D-ribosyl)imidazole + S-adenosyl-L-methionine = 4-amino-2-methyl-5-(phosphooxymethyl)pyrimidine + CO + 5'-deoxyadenosine + formate + L-methionine + 3 H(+). The protein operates within cofactor biosynthesis; thiamine diphosphate biosynthesis. Functionally, catalyzes the synthesis of the hydroxymethylpyrimidine phosphate (HMP-P) moiety of thiamine from aminoimidazole ribotide (AIR) in a radical S-adenosyl-L-methionine (SAM)-dependent reaction. This Photorhabdus laumondii subsp. laumondii (strain DSM 15139 / CIP 105565 / TT01) (Photorhabdus luminescens subsp. laumondii) protein is Phosphomethylpyrimidine synthase.